Here is a 447-residue protein sequence, read N- to C-terminus: Xylose isomerase (447 aa).

Catalysis depends on residues H102 and D105. Mg(2+)-binding residues include E233, E269, H272, D297, D308, D310, and D340.

It belongs to the xylose isomerase family. As to quaternary structure, homotetramer. The cofactor is Mg(2+).

The protein localises to the cytoplasm. The enzyme catalyses alpha-D-xylose = alpha-D-xylulofuranose. This is Xylose isomerase from Pediococcus pentosaceus (strain ATCC 25745 / CCUG 21536 / LMG 10740 / 183-1w).